We begin with the raw amino-acid sequence, 356 residues long: Phosphoserine aminotransferase (356 aa).

Residue arginine 41 participates in L-glutamate binding. Residues 76–77 (AS), tryptophan 102, threonine 150, aspartate 169, and glutamine 192 each bind pyridoxal 5'-phosphate. Residue lysine 193 is modified to N6-(pyridoxal phosphate)lysine. 234–235 (NT) is a binding site for pyridoxal 5'-phosphate.

It belongs to the class-V pyridoxal-phosphate-dependent aminotransferase family. SerC subfamily. Homodimer. Pyridoxal 5'-phosphate serves as cofactor.

It localises to the cytoplasm. The enzyme catalyses O-phospho-L-serine + 2-oxoglutarate = 3-phosphooxypyruvate + L-glutamate. The catalysed reaction is 4-(phosphooxy)-L-threonine + 2-oxoglutarate = (R)-3-hydroxy-2-oxo-4-phosphooxybutanoate + L-glutamate. It functions in the pathway amino-acid biosynthesis; L-serine biosynthesis; L-serine from 3-phospho-D-glycerate: step 2/3. The protein operates within cofactor biosynthesis; pyridoxine 5'-phosphate biosynthesis; pyridoxine 5'-phosphate from D-erythrose 4-phosphate: step 3/5. Catalyzes the reversible conversion of 3-phosphohydroxypyruvate to phosphoserine and of 3-hydroxy-2-oxo-4-phosphonooxybutanoate to phosphohydroxythreonine. This is Phosphoserine aminotransferase from Flavobacterium psychrophilum (strain ATCC 49511 / DSM 21280 / CIP 103535 / JIP02/86).